Here is a 1761-residue protein sequence, read N- to C-terminus: Laminin subunit beta-4 (1761 aa).

Residues 1-19 (MQFQLTLFLHLGWLSYSKA) form the signal peptide. The 241-residue stretch at 24–264 (NRGACHPTTG…ALYEMIVRGS (241 aa)) folds into the Laminin N-terminal domain. 3 N-linked (GlcNAc...) asparagine glycosylation sites follow: Asn169, Asn229, and Asn246. Intrachain disulfides connect Cys265–Cys274, Cys267–Cys295, Cys297–Cys306, Cys309–Cys329, Cys332–Cys341, Cys334–Cys359, Cys362–Cys371, Cys374–Cys392, Cys395–Cys408, Cys397–Cys423, Cys425–Cys434, Cys437–Cys452, Cys455–Cys468, Cys457–Cys475, Cys477–Cys486, Cys489–Cys503, Cys506–Cys518, Cys508–Cys525, and Cys527–Cys536. 4 consecutive Laminin EGF-like domains span residues 265 to 331 (CFCN…ACRS), 332 to 394 (CSCN…ACIP), 395 to 454 (CECD…GCQP), and 455 to 505 (CDCN…GCSP). The Laminin EGF-like 5; truncated domain maps to 506-552 (CDCDIGGAYSNVCSPKNGQCECRPHVTGRSCSEPAPGYFFAPLNFYL). A Laminin IV type B domain is found at 545-763 (FAPLNFYLYE…LIISMSAKLH (219 aa)). Disulfide bonds link Cys769–Cys781, Cys771–Cys788, Cys790–Cys799, Cys802–Cys814, Cys817–Cys829, Cys819–Cys836, Cys838–Cys847, Cys850–Cys860, Cys863–Cys872, Cys865–Cys879, Cys882–Cys891, Cys894–Cys908, Cys913–Cys938, Cys940–Cys949, Cys952–Cys967, Cys970–Cys984, Cys972–Cys991, Cys994–Cys1003, Cys1006–Cys1019, Cys1022–Cys1043, Cys1024–Cys1050, Cys1052–Cys1061, Cys1064–Cys1077, Cys1080–Cys1092, Cys1082–Cys1099, Cys1101–Cys1110, Cys1113–Cys1125, Cys1128–Cys1140, Cys1130–Cys1147, Cys1149–Cys1158, and Cys1161–Cys1172. 8 consecutive Laminin EGF-like domains span residues 769–816 (CKCH…GCHP), 817–862 (CHCH…SCHP), 863–910 (CPCN…PCRP), 911–969 (CLCP…PCQP), 970–1021 (CACN…TCRR), 1022–1079 (CSCH…GCQS), 1080–1127 (CDCD…RCIP), and 1128–1174 (CDCN…TCLQ). The N-linked (GlcNAc...) asparagine glycan is linked to Asn1016. The N-linked (GlcNAc...) asparagine glycan is linked to Asn1055. The tract at residues 1175-1375 (CHLCFDQWDH…PDIQILNEKV (201 aa)) is domain II. 5 N-linked (GlcNAc...) asparagine glycosylation sites follow: Asn1223, Asn1301, Asn1326, Asn1333, and Asn1354. The stretch at 1243–1301 (KVKDYHDSVRRQIMQLNEQLKAVYEFQDLKDTIERAKNEADLLLEDLQEEIDLQSSVLN) forms a coiled coil. Residues 1376–1408 (CGDPGNVPCVPLPCGGALCTGRKGHRKCRGPGC) form a domain alpha region. The interval 1409 to 1761 (HGSLTLSTNA…QEKKYARCYS (353 aa)) is domain I. Residues 1416-1480 (TNALQKAQEA…SDSEEENINL (65 aa)) adopt a coiled-coil conformation. Residues Asn1469, Asn1517, Asn1587, Asn1596, Asn1609, and Asn1725 are each glycosylated (N-linked (GlcNAc...) asparagine). Positions 1525–1759 (IQKHMQLCED…VEQEKKYARC (235 aa)) form a coiled coil.

Laminin is a complex glycoprotein, consisting of three different polypeptide chains (alpha, beta, gamma), which are bound to each other by disulfide bonds into a cross-shaped molecule comprising one long and three short arms with globules at each end.

It is found in the secreted. Its subcellular location is the extracellular space. The protein localises to the extracellular matrix. It localises to the basement membrane. Binding to cells via a high affinity receptor, laminin is thought to mediate the attachment, migration and organization of cells into tissues during embryonic development by interacting with other extracellular matrix components. The chain is Laminin subunit beta-4 (LAMB4) from Homo sapiens (Human).